Reading from the N-terminus, the 184-residue chain is MNWRSERIWIELITGSRKTSNFCWACILFLGSLGFLLVGTSSYLGRNLISLFPSQQIIFFPQGIVMSFYGIAGLFISSYLWCTISWNVGSGYDRFDRKEGIVCIFRWGFPGINRRIFLRFLMRDIQSIRMEVKGGLYSRRVLYMEIRGQGAIPLTRTDENFTPREIEQKAAELAYFLRVPIELK.

2 helical membrane-spanning segments follow: residues 21–43 (NFCW…TSSY) and 58–80 (IFFP…SSYL).

The protein belongs to the Ycf4 family.

The protein localises to the plastid. Its subcellular location is the chloroplast thylakoid membrane. Its function is as follows. Seems to be required for the assembly of the photosystem I complex. The sequence is that of Photosystem I assembly protein Ycf4 from Calycanthus floridus var. glaucus (Eastern sweetshrub).